A 300-amino-acid chain; its full sequence is MAETPRLLFVHAHPDDESLGTGATIAHYTAAGADVRVVTCTLGEEGEVIGERWAELAVDRADQLGGYRIGELTAALRELGVGEPCYLGGAGRWRDSGMPGTPRRRRQRFIDADEREAVGALVAIIREQRPHVVVGYDPAGGYGHPDHVHVHTVTTAAVAAAGAGNFPGEPWAVPKFYWSVFATRPFEAAVQALTPEDLRPGWSMPSAEQFTFGYADEHIDAVVAAGPHAWAAKRAALAAHATQVVVGPTGRACALSNNVALPILDEEHYVLVAGAAGARDERGWETDLLAGLEFGAAPRR.

Residues histidine 13, aspartate 16, and histidine 147 each contribute to the Zn(2+) site.

This sequence belongs to the MshB deacetylase family. Zn(2+) is required as a cofactor.

The catalysed reaction is 1D-myo-inositol 2-acetamido-2-deoxy-alpha-D-glucopyranoside + H2O = 1D-myo-inositol 2-amino-2-deoxy-alpha-D-glucopyranoside + acetate. Functionally, catalyzes the deacetylation of 1D-myo-inositol 2-acetamido-2-deoxy-alpha-D-glucopyranoside (GlcNAc-Ins) in the mycothiol biosynthesis pathway. The sequence is that of 1D-myo-inositol 2-acetamido-2-deoxy-alpha-D-glucopyranoside deacetylase from Mycolicibacterium paratuberculosis (strain ATCC BAA-968 / K-10) (Mycobacterium paratuberculosis).